Consider the following 98-residue polypeptide: Aspartyl/glutamyl-tRNA(Asn/Gln) amidotransferase subunit C (98 aa).

The tract at residues Pro-70–Asp-98 is disordered.

It belongs to the GatC family. In terms of assembly, heterotrimer of A, B and C subunits.

The enzyme catalyses L-glutamyl-tRNA(Gln) + L-glutamine + ATP + H2O = L-glutaminyl-tRNA(Gln) + L-glutamate + ADP + phosphate + H(+). It catalyses the reaction L-aspartyl-tRNA(Asn) + L-glutamine + ATP + H2O = L-asparaginyl-tRNA(Asn) + L-glutamate + ADP + phosphate + 2 H(+). Functionally, allows the formation of correctly charged Asn-tRNA(Asn) or Gln-tRNA(Gln) through the transamidation of misacylated Asp-tRNA(Asn) or Glu-tRNA(Gln) in organisms which lack either or both of asparaginyl-tRNA or glutaminyl-tRNA synthetases. The reaction takes place in the presence of glutamine and ATP through an activated phospho-Asp-tRNA(Asn) or phospho-Glu-tRNA(Gln). This chain is Aspartyl/glutamyl-tRNA(Asn/Gln) amidotransferase subunit C, found in Streptomyces avermitilis (strain ATCC 31267 / DSM 46492 / JCM 5070 / NBRC 14893 / NCIMB 12804 / NRRL 8165 / MA-4680).